The primary structure comprises 390 residues: MAQSTVESKNRKDINNGKIPAKETILSPRFYTTDFEAMENMDLSINEEELEAICEEFRKDYNRHHFVRNSEFEGAAEKLDPETRELFVDFLEGSCTSEFSGFLLYKELSKRIKVKNPLLAECFAHMARDEARHAGFLNKSMSDFGLQLDLGFLTANKDYTYFPPRSIFYATYLSEKIGYWRYIAIYRHLEKNPDSKIFPLFNYFENWCQDENRHGDFFDALMKAQPRTVKSLSKKITIGGSTFTHPLFDYFHRFRYFLNNLPLTSKLWSRFFLLAVFATMYARDLGIKKDFYSSLGLDARDYDQFVINKTNETAARVFPVVMDVYDNSFYGRLDKIVENNKVLSDIANSDGNKVSKTFKKLPKYLSNGYQLLRLYLLKPLDSKDFQPSIR.

This sequence belongs to the AcsF family. The cofactor is Fe cation.

The enzyme catalyses Mg-protoporphyrin IX 13-monomethyl ester + 3 NADPH + 3 O2 + 2 H(+) = 3,8-divinyl protochlorophyllide a + 3 NADP(+) + 5 H2O. Its pathway is porphyrin-containing compound metabolism; chlorophyll biosynthesis (light-independent). Its function is as follows. Catalyzes the formation of the isocyclic ring in chlorophyll biosynthesis. Mediates the cyclase reaction, which results in the formation of divinylprotochlorophyllide (Pchlide) characteristic of all chlorophylls from magnesium-protoporphyrin IX 13-monomethyl ester (MgPMME). This chain is Magnesium-protoporphyrin IX monomethyl ester [oxidative] cyclase, found in Prochlorococcus marinus (strain AS9601).